Reading from the N-terminus, the 94-residue chain is Antifungal protein (94 aa).

The N-terminal stretch at 1–21 (MKFVSLASLGFALVAALGAVA) is a signal peptide. Positions 22-43 (TPVEADSLTAGGLDARDESAVL) are excised as a propeptide. Intrachain disulfides connect C50–C76, C57–C83, C69–C71, and C92–C94.

This sequence belongs to the antifungal protein pafB family.

Its subcellular location is the secreted. The protein localises to the host cytoplasm. Functionally, antifungal protein that acts as an inhibitor of growth of a variety of fungal species. The polypeptide is Antifungal protein (afp) (Aspergillus giganteus).